Consider the following 470-residue polypeptide: Macrophage metalloelastase (470 aa).

Positions 1-16 (MKFLLILLLQATASGA) are cleaved as a signal peptide. Residues 17 to 105 (LPLNSSTSLE…DVHHFREMPG (89 aa)) constitute a propeptide, activation peptide. N-linked (GlcNAc...) asparagine glycosylation occurs at asparagine 20. The short motif at 90-97 (PRCGVPDV) is the Cysteine switch element. Cysteine 92 is a Zn(2+) binding site. Aspartate 124 and aspartate 158 together coordinate Ca(2+). Zn(2+)-binding residues include histidine 168 and aspartate 170. The Ca(2+) site is built by aspartate 175, glycine 176, glycine 178, and isoleucine 180. Residue histidine 183 participates in Zn(2+) binding. Ca(2+)-binding residues include glycine 190, glycine 192, and aspartate 194. Position 196 (histidine 196) interacts with Zn(2+). Residues aspartate 198, glutamate 199, and glutamate 201 each contribute to the Ca(2+) site. Histidine 218 is a Zn(2+) binding site. Glutamate 219 is a catalytic residue. Residues histidine 222 and histidine 228 each coordinate Zn(2+). Hemopexin repeat units follow at residues 279-328 (PALC…WPTL), 329-375 (PSGI…GFPN), 377-425 (VKKI…FQGI), and 426-470 (GPKI…WFGC). Residues cysteine 282 and cysteine 470 are joined by a disulfide bond. Asparagine 285 carries an N-linked (GlcNAc...) asparagine glycan. Ca(2+)-binding residues include aspartate 289, glutamate 333, aspartate 381, and aspartate 430.

This sequence belongs to the peptidase M10A family. Ca(2+) is required as a cofactor. The cofactor is Zn(2+). Found in alveolar macrophages but not in peripheral blood monocytes.

The protein resides in the secreted. It localises to the extracellular space. It is found in the extracellular matrix. The enzyme catalyses Hydrolysis of soluble and insoluble elastin. Specific cleavages are also produced at 14-Ala-|-Leu-15 and 16-Tyr-|-Leu-17 in the B chain of insulin.. Functionally, may be involved in tissue injury and remodeling. Has significant elastolytic activity. Can accept large and small amino acids at the P1' site, but has a preference for leucine. Aromatic or hydrophobic residues are preferred at the P1 site, with small hydrophobic residues (preferably alanine) occupying P3. This Homo sapiens (Human) protein is Macrophage metalloelastase (MMP12).